The following is a 504-amino-acid chain: Glucose-6-phosphate isomerase (504 aa).

The active-site Proton donor is the Glu-333. Catalysis depends on residues His-364 and Lys-473.

Belongs to the GPI family.

It is found in the cytoplasm. It carries out the reaction alpha-D-glucose 6-phosphate = beta-D-fructose 6-phosphate. The protein operates within carbohydrate biosynthesis; gluconeogenesis. It participates in carbohydrate degradation; glycolysis; D-glyceraldehyde 3-phosphate and glycerone phosphate from D-glucose: step 2/4. In terms of biological role, catalyzes the reversible isomerization of glucose-6-phosphate to fructose-6-phosphate. The protein is Glucose-6-phosphate isomerase of Xanthomonas oryzae pv. oryzae (strain MAFF 311018).